A 480-amino-acid chain; its full sequence is Carboxy-terminal processing protease CtpB (480 aa).

A signal peptide spans 1-23 (MNQKIMAVIAAGSMLFGGAGVYA). In terms of domain architecture, PDZ spans 92-182 (SVYMDKQTAK…SSVSMKIQRP (91 aa)). Residues 113–116 (GIGA) are peptide binding. Ser-309 acts as the Nucleophile in catalysis. Catalysis depends on charge relay system residues Lys-334 and Gln-338.

The protein belongs to the peptidase S41A family. As to quaternary structure, homodimer. Is cleaved by SpoIVB in vitro and in vivo but this cleavage does not appear to be necessary for CtpB activation. CtpB can also cleave itself in vivo.

Its subcellular location is the forespore intermembrane space. It catalyses the reaction The enzyme shows specific recognition of a C-terminal tripeptide, Xaa-Yaa-Zaa, in which Xaa is preferably Ala or Leu, Yaa is preferably Ala or Tyr, and Zaa is preferably Ala, but then cleaves at a variable distance from the C-terminus. A typical cleavage is -Ala-Ala-|-Arg-Ala-Ala-Lys-Glu-Asn-Tyr-Ala-Leu-Ala-Ala.. Activated by peptide binding to the PDZ domain. In terms of biological role, involved in the signal transduction pathway leading to the proteolytic activation of the mother cell transcription factor pro-sigma-K during sporulation. The signaling serine protease CtpB triggers pro-sigma-K processing by cleaving the pre-processed regulatory protein SpoIVFA and is necessary for the proper timing of sigma-K activation. The chain is Carboxy-terminal processing protease CtpB (ctpB) from Bacillus subtilis (strain 168).